The primary structure comprises 270 residues: MSFSQLFPKYNSSFNPLRGSAIQCSVIQLQQNKVLVDTGLKTPIICFQHELKRVPITKQARFHFGIEDVEVFGEPKMLLPKPLEIKCKRKLVWIELTKIWRSDQNLVKGFILNSVKGGYAVAIAGYIAFLPKSLLRSRKVFYSQWRIFSILNMKPKISNIVVKEIGDGKIDYFSPTKSHQKQTKYLGAKLKHWRNMKKNTNVKKKYIFSEKVPTTKKTKQGFKHLGPKPLAYTEKKRETTKQSTKNNVFQLKDQGQGKSLVFVDVLTQSS.

The segment at 218-250 is disordered; the sequence is TKQGFKHLGPKPLAYTEKKRETTKQSTKNNVFQ.

The protein belongs to the bacterial ribosomal protein bS1 family.

Its subcellular location is the mitochondrion. This Marchantia polymorpha (Common liverwort) protein is Small ribosomal subunit protein bS1m (RPS1).